Reading from the N-terminus, the 1408-residue chain is Palladin (1408 aa).

The interval 69–229 is disordered; it reads SKSPISLCET…SASQSPTADQ (161 aa). Composition is skewed to polar residues over residues 149 to 169 and 193 to 229; these read PNPSSKPKTAQQSKAGPQSQL and RSPNGESSSPDSGYLSPKNQPSALMSASASQSPTADQ. Ser194 is modified (phosphoserine). Ig-like C2-type domains lie at 278-367 and 448-546; these read PRFI…AEVF and PVFT…LVIT. 2 disulfides stabilise this stretch: Cys299–Cys351 and Cys469–Cys528. An interaction with VASP region spans residues 569 to 573; it reads FPPPP. 2 disordered regions span residues 631–660 and 687–727; these read NGKAYGNKSPPTPTALLSPTKEPPPLLAKP and PPGV…VPSE. Ser639 carries the phosphoserine modification. Position 642 is a phosphothreonine (Thr642). Phosphoserine is present on Ser648. Positions 653-683 are interaction with LASP1; it reads PPPLLAKPKLDPLKLQQLQNQVRLEQEACAW. Positions 683–713 are interaction with SORBS2, SPIN90 and SRC; that stretch reads WPPAPPGVPCNSSSSGSSAPPSPPFPPPPPA. A compositionally biased stretch (low complexity) spans 691 to 701; the sequence is PCNSSSSGSSA. Residues Ser700, Ser704, and Ser744 each carry the phosphoserine modification. Pro residues predominate over residues 702-714; it reads PPSPPFPPPPPAF. Disordered stretches follow at residues 758–854, 882–904, and 960–981; these read NLGP…RFGP, KGVTPAGFPKKSSRTARIASDEE, and ETAANQDAGAPRASVGGPLDGQ. The span at 765–779 shows a compositional bias: low complexity; sequence LPTPTSSPSSSSLPS. Pro residues-rich tracts occupy residues 780 to 797, 807 to 818, and 828 to 840; these read PLSPTPRPFGRAPGPPFV, SPSPPPPPPPVF, and DVFPLPPPPPPLP. An interaction with EPS8 region spans residues 782–842; the sequence is SPTPRPFGRA…PPPPPPLPSS (61 aa). The tract at residues 807–842 is interaction with SORBS2, SPIN90, SRC and PFN1; it reads SPSPPPPPPPVFSPSAAYPVPDVFPLPPPPPPLPSS. The segment at 830–834 is interaction with VASP; the sequence is FPLPP. Ser901 carries the phosphoserine modification. Phosphoserine is present on residues Ser1004 and Ser1009. The 85-residue stretch at 1026-1110 folds into the Ig-like C2-type 3 domain; that stretch reads PFFEMKLKHY…MAANPQGRVS (85 aa). The segment at 1121–1150 is disordered; that stretch reads NQRGRSPRSPSGHPHARRPRSRSRDSGDEN. The segment covering 1123–1133 has biased composition (low complexity); sequence RGRSPRSPSGH. Phosphoserine occurs at positions 1126, 1129, 1131, and 1141. Ser1143 bears the Phosphoserine; by PKB/AKT1 mark. Residue Ser1146 is modified to Phosphoserine. Ig-like C2-type domains lie at 1160–1251 and 1259–1349; these read PHFL…LVVA and PVFM…ARLD. Interaction with EZR regions lie at residues 1162 to 1251 and 1261 to 1351; these read FLQA…LVVA and FMEK…LDVY. Cys1181 and Cys1233 are joined by a disulfide. Ser1377 carries the post-translational modification Phosphoserine.

Belongs to the myotilin/palladin family. In terms of assembly, interacts with EPS8. Interacts with LASP1. Interacts with VASP. Interacts with ACTN. Interacts with SORBS2. Interacts with PFN1. Interacts with LPP. Interacts with SPIN90. Interacts with SRC. Interacts with EZR. Interacts with RAI14. In terms of processing, phosphorylated predominantly on serines and, to a lesser extent, on tyrosines. Phosphorylation at Ser-1143 by PKB/AKT1 modulates cytoskeletal organization and cell motility. As to expression, detected in both muscle and non-muscle tissues and cells (at protein level). Isoform 3 is widely expressed, isoform 4 is particularly abundant in tissues rich in smooth muscle and in the cardiac muscle and isoform 1 is detected in heart.

The protein localises to the cytoplasm. It is found in the cytoskeleton. The protein resides in the cell junction. It localises to the focal adhesion. Its subcellular location is the myofibril. The protein localises to the sarcomere. It is found in the z line. The protein resides in the cell projection. It localises to the ruffle. Its subcellular location is the podosome. The protein localises to the lamellipodium. It is found in the axon. The protein resides in the growth cone. Cytoskeletal protein required for organization of normal actin cytoskeleton. Roles in establishing cell morphology, motility, cell adhesion and cell-extracellular matrix interactions in a variety of cell types. May function as a scaffolding molecule with the potential to influence both actin polymerization and the assembly of existing actin filaments into higher-order arrays. Binds to proteins that bind to either monomeric or filamentous actin. Localizes at sites where active actin remodeling takes place, such as lamellipodia and membrane ruffles. Different isoforms may have functional differences. Involved in the control of morphological and cytoskeletal changes associated with dendritic cell maturation. Involved in targeting ACTN to specific subcellular locations. May be required for the initiation of neural tube closure. This chain is Palladin (Palld), found in Mus musculus (Mouse).